Here is a 335-residue protein sequence, read N- to C-terminus: Serpentine receptor class XA 10 (335 aa).

The Extracellular portion of the chain corresponds to 1–10; it reads MDVDAAVVKR. Residues 11-31 form a helical membrane-spanning segment; the sequence is IALWVYETCSVFNLFYCITLS. Over 32–46 the chain is Cytoplasmic; it reads LAIKTSKNNALPATY. A helical membrane pass occupies residues 47–67; it reads IYNMAISNALLVIFGIMVYIL. Residues 68–82 are Extracellular-facing; that stretch reads PYYMSDKTYKTYRDS. Residues 83 to 103 form a helical membrane-spanning segment; sequence IGAMISVGVTFNYLHPMLTLI. At 104-126 the chain is on the cytoplasmic side; that stretch reads LMTINRIAVVVSMQASQLFTSSK. The chain crosses the membrane as a helical span at residues 127–147; it reads IWLYTSFHMTANFACLIIPYL. Residues 148–177 lie on the Extracellular side of the membrane; the sequence is SECRINYDIRKVGFISECAPDRHQITTFSN. A helical membrane pass occupies residues 178 to 198; that stretch reads YYSVFFPFVAFFFNVLVIINF. Topologically, residues 199 to 238 are cytoplasmic; sequence KLQRSPTYTKIKNMFRRGNGDQFTSMPSDVLKAKKKTERM. A helical transmembrane segment spans residues 239–259; sequence LMIQAFITAFYLSVYELTSLV. The Extracellular portion of the chain corresponds to 260-276; it reads LRVVPELFGNLSLDGKL. A helical membrane pass occupies residues 277-297; sequence AFTYFRLAQVPCHVFLVYFIF. At 298–319 the chain is on the cytoplasmic side; it reads TPVTRKIYMDFVRERVFCMKPA.

The protein belongs to the nematode receptor-like protein srxa family.

The protein localises to the membrane. This chain is Serpentine receptor class XA 10 (srxa-10), found in Caenorhabditis elegans.